A 494-amino-acid polypeptide reads, in one-letter code: Cysteine--tRNA ligase (494 aa).

A Zn(2+)-binding site is contributed by cysteine 29. The short motif at 31–41 (LTVSDDAHLGH) is the 'HIGH' region element. The tract at residues 187 to 220 (KAGGVSPDDANTHRDDELPPLDGERGQTWASPWG) is disordered. Basic and acidic residues predominate over residues 196-211 (ANTHRDDELPPLDGER). Residues cysteine 230, histidine 255, and glutamate 259 each contribute to the Zn(2+) site. A 'KMSKS' region motif is present at residues 287–291 (KMSSS).

It belongs to the class-I aminoacyl-tRNA synthetase family. The cofactor is Zn(2+).

Its subcellular location is the cytoplasm. The enzyme catalyses tRNA(Cys) + L-cysteine + ATP = L-cysteinyl-tRNA(Cys) + AMP + diphosphate. This is Cysteine--tRNA ligase from Halobacterium salinarum (strain ATCC 700922 / JCM 11081 / NRC-1) (Halobacterium halobium).